Here is a 503-residue protein sequence, read N- to C-terminus: ATP synthase subunit alpha (503 aa).

170 to 177 (GDRATGKT) contacts ATP.

The protein belongs to the ATPase alpha/beta chains family. In terms of assembly, F-type ATPases have 2 components, CF(1) - the catalytic core - and CF(0) - the membrane proton channel. CF(1) has five subunits: alpha(3), beta(3), gamma(1), delta(1), epsilon(1). CF(0) has three main subunits: a(1), b(2) and c(9-12). The alpha and beta chains form an alternating ring which encloses part of the gamma chain. CF(1) is attached to CF(0) by a central stalk formed by the gamma and epsilon chains, while a peripheral stalk is formed by the delta and b chains.

It localises to the cell inner membrane. The catalysed reaction is ATP + H2O + 4 H(+)(in) = ADP + phosphate + 5 H(+)(out). Produces ATP from ADP in the presence of a proton gradient across the membrane. The alpha chain is a regulatory subunit. This chain is ATP synthase subunit alpha, found in Aquifex aeolicus (strain VF5).